Here is a 353-residue protein sequence, read N- to C-terminus: Aliphatic aldoxime dehydratase (353 aa).

Ser219 contributes to the an aliphatic aldoxime binding site. His299 is a heme b binding site. His320 serves as a coordination point for an aliphatic aldoxime. His320 is a catalytic residue.

Belongs to the heme-containing dehydratase family. Homodimer. Heme b serves as cofactor.

It catalyses the reaction an aliphatic aldoxime = a nitrile + H2O. Active when the heme iron is in the ferrous state. The activity is enhanced by reducing agents, such as Na(2)S, Na(2)S(2)(O4), 2-mercaptoethanol, and L-cysteine and supplementary additions of electron acceptors such as flavins, sulfite ion, and vitamin K3. The effect of various chemicals on the enzyme activity is different in the presence and absence of the reducing reagent, Na(2)S, which acts not only as a reductant but also changes the substrate specificity of the enzyme. In terms of biological role, catalyzes the dehydration of aldoximes to their corresponding nitrile. Is active toward various arylalkyl- and alkyl-aldoximes, and to a lesser extent toward aryl-aldoximes. The protein is Aliphatic aldoxime dehydratase of Rhodococcus erythropolis (Arthrobacter picolinophilus).